We begin with the raw amino-acid sequence, 469 residues long: Adenosylhomocysteinase (469 aa).

Residues T63, D139, and E164 each contribute to the substrate site. Residue 165–167 (TTT) coordinates NAD(+). Substrate is bound by residues K194 and D198. Residues N199, 228–233 (GYGDVG), E251, N300, 321–323 (IGH), and N375 each bind NAD(+).

The protein belongs to the adenosylhomocysteinase family. It depends on NAD(+) as a cofactor.

It is found in the cytoplasm. The enzyme catalyses S-adenosyl-L-homocysteine + H2O = L-homocysteine + adenosine. The protein operates within amino-acid biosynthesis; L-homocysteine biosynthesis; L-homocysteine from S-adenosyl-L-homocysteine: step 1/1. Functionally, may play a key role in the regulation of the intracellular concentration of adenosylhomocysteine. The polypeptide is Adenosylhomocysteinase (Pseudomonas putida (strain W619)).